A 481-amino-acid chain; its full sequence is 6-phosphogluconate dehydrogenase, decarboxylating (481 aa).

NADP(+) contacts are provided by residues 11 to 16, 34 to 36, 76 to 78, and Asn104; these read GLAVMG, NRT, and VKA. Substrate contacts are provided by residues Asn104 and 130–132; that span reads SGG. The Proton acceptor role is filled by Lys184. 187-188 is a binding site for substrate; that stretch reads HN. Glu191 functions as the Proton donor in the catalytic mechanism. Residues Tyr192, Lys259, Arg286, Arg445, and His451 each coordinate substrate.

The protein belongs to the 6-phosphogluconate dehydrogenase family. In terms of assembly, homodimer.

The enzyme catalyses 6-phospho-D-gluconate + NADP(+) = D-ribulose 5-phosphate + CO2 + NADPH. Its pathway is carbohydrate degradation; pentose phosphate pathway; D-ribulose 5-phosphate from D-glucose 6-phosphate (oxidative stage): step 3/3. Catalyzes the oxidative decarboxylation of 6-phosphogluconate to ribulose 5-phosphate and CO(2), with concomitant reduction of NADP to NADPH. This is 6-phosphogluconate dehydrogenase, decarboxylating (Pgd) from Ceratitis capitata (Mediterranean fruit fly).